The primary structure comprises 787 residues: Glutamine-dependent NAD(+) synthetase (787 aa).

Residues 5–275 (VTVAVSTLNQ…VEVTLATIDL (271 aa)) form the CN hydrolase domain. Glu-45 (proton acceptor; for glutaminase activity) is an active-site residue. Residue Lys-114 is the For glutaminase activity of the active site. Cys-175 acts as the Nucleophile; for glutaminase activity in catalysis. The ligase stretch occupies residues 325-787 (MHTPEEEIAL…KIKDRTGIPV (463 aa)). Position 355–362 (355–362 (PLSGGVDS)) interacts with ATP. Ser-357 is a catalytic residue. Ser-703 bears the Phosphoserine mark.

It in the C-terminal section; belongs to the NAD synthetase family.

The catalysed reaction is deamido-NAD(+) + L-glutamine + ATP + H2O = L-glutamate + AMP + diphosphate + NAD(+) + H(+). It functions in the pathway cofactor biosynthesis; NAD(+) biosynthesis; NAD(+) from deamido-NAD(+) (L-Gln route): step 1/1. Functionally, catalyzes the ATP-dependent amidation of deamido-NAD to form NAD. Uses L-glutamine as a nitrogen source. Because of its role in energy metabolism, involved in the modulation of aged-related cardiac function, mobility, and lifespan. This Drosophila melanogaster (Fruit fly) protein is Glutamine-dependent NAD(+) synthetase.